The sequence spans 362 residues: tRNA/tmRNA (uracil-C(5))-methyltransferase (362 aa).

Positions 182, 210, 215, 231, and 293 each coordinate S-adenosyl-L-methionine. The active-site Nucleophile is the cysteine 318. Catalysis depends on glutamate 352, which acts as the Proton acceptor.

This sequence belongs to the class I-like SAM-binding methyltransferase superfamily. RNA M5U methyltransferase family. TrmA subfamily.

It carries out the reaction uridine(54) in tRNA + S-adenosyl-L-methionine = 5-methyluridine(54) in tRNA + S-adenosyl-L-homocysteine + H(+). The enzyme catalyses uridine(341) in tmRNA + S-adenosyl-L-methionine = 5-methyluridine(341) in tmRNA + S-adenosyl-L-homocysteine + H(+). Dual-specificity methyltransferase that catalyzes the formation of 5-methyluridine at position 54 (m5U54) in all tRNAs, and that of position 341 (m5U341) in tmRNA (transfer-mRNA). This Neisseria gonorrhoeae (strain ATCC 700825 / FA 1090) protein is tRNA/tmRNA (uracil-C(5))-methyltransferase.